A 112-amino-acid polypeptide reads, in one-letter code: Large ribosomal subunit protein uL24 (112 aa).

The protein belongs to the universal ribosomal protein uL24 family. As to quaternary structure, part of the 50S ribosomal subunit.

Functionally, one of two assembly initiator proteins, it binds directly to the 5'-end of the 23S rRNA, where it nucleates assembly of the 50S subunit. One of the proteins that surrounds the polypeptide exit tunnel on the outside of the subunit. The polypeptide is Large ribosomal subunit protein uL24 (Magnetococcus marinus (strain ATCC BAA-1437 / JCM 17883 / MC-1)).